A 527-amino-acid polypeptide reads, in one-letter code: Glutamate--cysteine ligase (527 aa).

Belongs to the glutamate--cysteine ligase type 1 family. Type 1 subfamily.

The enzyme catalyses L-cysteine + L-glutamate + ATP = gamma-L-glutamyl-L-cysteine + ADP + phosphate + H(+). It participates in sulfur metabolism; glutathione biosynthesis; glutathione from L-cysteine and L-glutamate: step 1/2. This Bordetella petrii (strain ATCC BAA-461 / DSM 12804 / CCUG 43448) protein is Glutamate--cysteine ligase.